The primary structure comprises 843 residues: Beta-mannosidase B (843 aa).

The active-site Proton donor is the E432.

This sequence belongs to the glycosyl hydrolase 2 family. Beta-mannosidase B subfamily.

It catalyses the reaction Hydrolysis of terminal, non-reducing beta-D-mannose residues in beta-D-mannosides.. Its pathway is glycan metabolism; N-glycan degradation. In terms of biological role, exoglycosidase that cleaves the single beta-linked mannose residue from the non-reducing end of beta-mannosidic oligosaccharides of various complexity and length. Prefers mannobiose over mannotriose and has no activity against polymeric mannan. Is also severely restricted by galactosyl substitutions at the +1 subsite. Releases the terminal mannose residue from mannobiose, mannotriose and galactosyl-mannotriose (GM3), but not from galactosyl-mannobiose (GM2) or di-galactosyl-mannopentaose (G2M5). The polypeptide is Beta-mannosidase B (mndB) (Emericella nidulans (strain FGSC A4 / ATCC 38163 / CBS 112.46 / NRRL 194 / M139) (Aspergillus nidulans)).